We begin with the raw amino-acid sequence, 315 residues long: Transaldolase (315 aa).

Residue lysine 125 is the Schiff-base intermediate with substrate of the active site.

The protein belongs to the transaldolase family. Type 1 subfamily. Homodimer.

The protein resides in the cytoplasm. It catalyses the reaction D-sedoheptulose 7-phosphate + D-glyceraldehyde 3-phosphate = D-erythrose 4-phosphate + beta-D-fructose 6-phosphate. The protein operates within carbohydrate degradation; pentose phosphate pathway; D-glyceraldehyde 3-phosphate and beta-D-fructose 6-phosphate from D-ribose 5-phosphate and D-xylulose 5-phosphate (non-oxidative stage): step 2/3. In terms of biological role, transaldolase is important for the balance of metabolites in the pentose-phosphate pathway. The protein is Transaldolase of Polaromonas sp. (strain JS666 / ATCC BAA-500).